Here is a 598-residue protein sequence, read N- to C-terminus: Arginine--tRNA ligase (598 aa).

The 'HIGH' region motif lies at 139–149 (ANPTGPMHVGH).

Belongs to the class-I aminoacyl-tRNA synthetase family. Monomer.

The protein localises to the cytoplasm. The enzyme catalyses tRNA(Arg) + L-arginine + ATP = L-arginyl-tRNA(Arg) + AMP + diphosphate. The protein is Arginine--tRNA ligase of Bradyrhizobium sp. (strain BTAi1 / ATCC BAA-1182).